The primary structure comprises 248 residues: Transcription factor bHLH35 (248 aa).

Low complexity predominate over residues 37-54 (SGSYDSSSPDGAASSPAS). Residues 37–60 (SGSYDSSSPDGAASSPASKNIVSE) form a disordered region. In terms of domain architecture, bHLH spans 51–100 (SPASKNIVSERNRRQKLNQRLFALRSVVPNITKMDKASIIKDAISYIEGL).

Homodimer. As to expression, expressed constitutively in roots, leaves, stems, and flowers.

The protein resides in the nucleus. The sequence is that of Transcription factor bHLH35 (BHLH35) from Arabidopsis thaliana (Mouse-ear cress).